Consider the following 195-residue polypeptide: Imidazoleglycerol-phosphate dehydratase (195 aa).

This sequence belongs to the imidazoleglycerol-phosphate dehydratase family.

It localises to the cytoplasm. The catalysed reaction is D-erythro-1-(imidazol-4-yl)glycerol 3-phosphate = 3-(imidazol-4-yl)-2-oxopropyl phosphate + H2O. Its pathway is amino-acid biosynthesis; L-histidine biosynthesis; L-histidine from 5-phospho-alpha-D-ribose 1-diphosphate: step 6/9. This Campylobacter curvus (strain 525.92) protein is Imidazoleglycerol-phosphate dehydratase.